A 345-amino-acid chain; its full sequence is Membrane progestin receptor gamma-A (345 aa).

At 1-52 (MLNLIKLPQVFTINQVPKVFHEDGIISGYRHPCSSAKDCVLSLFQLTNETLN) the chain is on the cytoplasmic side. Residues 53 to 73 (IWTHFLPTWFFLWKLLTVVLV) form a helical membrane-spanning segment. Topologically, residues 74–80 (LEDWRDP) are extracellular. The helical transmembrane segment at 81–101 (FIWPFLVFLLSCCVYPLASSC) threads the bilayer. At 102–114 (AHTFSTMSERARH) the chain is on the cytoplasmic side. A helical membrane pass occupies residues 115 to 135 (ICFFFDYGALSFYSLGSAIIY). Over 136–148 (SSYSFPDKWVNGT) the chain is Extracellular. Residues 149–169 (FHLNYVSIAVVNSIISTALAC) form a helical membrane-spanning segment. Topologically, residues 170–201 (YSRLGLPFLEYNCHSIKRPSGKLDQKLCKCLR) are cytoplasmic. Residues 202–222 (IIAFVYPYLFDNIPLFYRIFV) form a helical membrane-spanning segment. Residues 223-272 (CAGEGCTVNEANTVHYQHTSLAFFTGFLFATHLPERLAPGSFDYIGHSHQ) are Extracellular-facing. Residues 273–293 (LFHVFAIIGTYFQMTAIELDM) form a helical membrane-spanning segment. The Cytoplasmic segment spans residues 294–314 (AARKQWLHAHLPPVTFLNTVG). The helical transmembrane segment at 315 to 335 (AAFFSVVSGLCIVYVFSLSLF) threads the bilayer. Residues 336-345 (STRGVKNKSF) lie on the Extracellular side of the membrane.

Belongs to the ADIPOR family.

It is found in the membrane. In terms of biological role, steroid membrane receptor. Binds progesterone. May be involved in oocyte maturation. This is Membrane progestin receptor gamma-A (paqr5a) from Danio rerio (Zebrafish).